The chain runs to 247 residues: Probable transcriptional regulatory protein PC1_1817 (247 aa).

The protein belongs to the TACO1 family.

The protein localises to the cytoplasm. This Pectobacterium carotovorum subsp. carotovorum (strain PC1) protein is Probable transcriptional regulatory protein PC1_1817.